The sequence spans 1174 residues: Male determiner protein Mdmd(Y) (1174 aa).

Residues 1 to 15 show a composition bias toward basic and acidic residues; the sequence is MNATDAESRKPENKP. Disordered regions lie at residues 1–51, 79–109, and 136–259; these read MNAT…SGQR, RKDG…HPVE, and KQLS…LRRS. Residues 16–35 show a composition bias toward low complexity; sequence SSESSSSGSTSGSSDGEVSS. Residues 36 to 47 are compositionally biased toward polar residues; that stretch reads KTYFKNNKSKVL. The span at 79 to 92 shows a compositional bias: basic and acidic residues; it reads RKDGSNEMLPKEDS. A compositionally biased stretch (low complexity) spans 138 to 153; it reads LSAYRSRSRSTRLSYS. Basic residues predominate over residues 167–180; sequence SRYKKSVLRNRRTS. Residues 183–200 show a composition bias toward basic and acidic residues; it reads HGRDSSTTKRSVSRDKDN. Over residues 201–223 the composition is skewed to basic residues; the sequence is RLRRRIGSSRSHTRSHSRFRRSE. A compositionally biased stretch (basic and acidic residues) spans 235 to 259; sequence RSQERRHERRRSMSSDYERIALRRS. The MIF4G domain occupies 348-531; sequence KKYIHGYINK…KVLFQVRRDG (184 aa). Positions 597 to 608 are enriched in low complexity; that stretch reads DSDGSFGSGSNS. Residues 597–616 are disordered; sequence DSDGSFGSGSNSETALSDCD. The MI domain occupies 641 to 757; sequence ALRRTIYLTL…SWDVLDCIKL (117 aa). Residues 840-857 are compositionally biased toward low complexity; that stretch reads SAPSSSSSSSLSSELSAP. Disordered stretches follow at residues 840 to 1045 and 1089 to 1135; these read SAPS…SRTK and KGGP…SREY. Composition is skewed to basic residues over residues 869–886 and 895–909; these read KKKH…KNPS and IVGK…KTIK. The span at 910–924 shows a compositional bias: basic and acidic residues; that stretch reads RRTDKDNSSSKDNFL. Over residues 926-957 the composition is skewed to low complexity; that stretch reads SESSSNESISLDSLSSELFAPSSYSSSESSND. Residues 963-1001 are compositionally biased toward basic residues; that stretch reads KHKGKNKKMTKKKNPSNKREKTKKKLSKNKKAPNKNTKK. A compositionally biased stretch (low complexity) spans 1010–1020; it reads SSESSISESKS. Positions 1034-1045 are enriched in basic residues; that stretch reads RKKRVTSKSRTK. Basic and acidic residues predominate over residues 1089 to 1118; the sequence is KGGPNCRKDNYGNRQNHEISQRHDSEIKRR. Basic residues predominate over residues 1119–1130; it reads REERKKRHHEKN.

It belongs to the CWC22 family. Component of the spliceosome C complex.

The protein localises to the nucleus speckle. Male determiner protein (M-factor) that controls male somatic sexual differentiation. Acts as a dominant factor that regulates the mRNA splicing of transformer (tra) and doublesex (dsx) transcripts and promotes expression of male splice forms of tra and dsx. Probably acts as a component of the spliceosome C complex required for mRNA splicing factor and exon-junction complex (EJC) assembly. Hinders eIF4AIII from non-specifically binding RNA and escorts it to the splicing machinery to promote EJC assembly on mature mRNAs. The polypeptide is Male determiner protein Mdmd(Y) (Musca domestica (House fly)).